The following is a 508-amino-acid chain: MDEYEAQLLVVEQALLVTTDAQQREELIALRANLEELLALTRSSETEDINETNTQQATDIDDELKRFQNELSSLEGEQTDSQDDQQRLEELRTKYNALLGEKCSAPHEHSWGALSYHNALICGVDDELILDKNGILDVRLRVLFTNPTHREMLPCNYYLEGECRFDETRCRYSHGALVPGAAIKDYNAPDFCRLARNCPVLAKLQDRLWHRGRVLCVNFMEQQCRVRLDGQEHKERERDFPFEELFPLIVEEDDELSSDSEETNETDGSDAANESDMDDVEAARQARMVELSLFTFKPNERLGAWEQYTRGIGSKLMASMGYIHGTGLGSDGRGIVTPVSAQILPQGRSLDACMELREAANGDKDYFSIERKLKRAQRRQQAANEKAYERESKRTDVFAFLNGSVLGQGSQRAENSTKTTKIDNLQQHTNKSLNVETVRIADDIRRKQRDIAKTQQSLARNAIDSQLQKRLSSQLQSQKQELATLQAQESSLSKEQQTRKSKNKMFEF.

The C3H1-type zinc-finger motif lies at 154–177 (PCNYYLEGECRFDETRCRYSHGAL). A disordered region spans residues 253-279 (DDELSSDSEETNETDGSDAANESDMDD). Positions 309 to 355 (TRGIGSKLMASMGYIHGTGLGSDGRGIVTPVSAQILPQGRSLDACME) constitute a G-patch domain. The segment covering 486–495 (QAQESSLSKE) has biased composition (polar residues). Positions 486-508 (QAQESSLSKEQQTRKSKNKMFEF) are disordered. Basic residues predominate over residues 499–508 (RKSKNKMFEF).

Its subcellular location is the nucleus. Functionally, transcription repressor. This Drosophila virilis (Fruit fly) protein is Zinc finger CCCH-type with G patch domain-containing protein.